Consider the following 1040-residue polypeptide: Multidrug resistance protein MdtB (1040 aa).

A run of 12 helical transmembrane segments spans residues 16–36, 347–367, 369–389, 396–416, 440–460, 472–492, 537–557, 863–883, 888–908, 911–931, 968–988, and 998–1018; these read FIMR…AGII, LMMA…NIPA, IIPG…MVFL, LTLM…IVVI, IGFT…PLLF, FAIT…TLTP, WLTL…WVFI, LGST…VLGI, FIHP…ALLA, IAGS…IGIV, ILMT…STGV, and IGMV…TPVI.

This sequence belongs to the resistance-nodulation-cell division (RND) (TC 2.A.6) family. MdtB subfamily. In terms of assembly, part of a tripartite efflux system composed of MdtA, MdtB and MdtC. MdtB forms a heteromultimer with MdtC.

Its subcellular location is the cell inner membrane. Its function is as follows. The MdtABC tripartite complex confers resistance against novobiocin and deoxycholate. This Escherichia coli O45:K1 (strain S88 / ExPEC) protein is Multidrug resistance protein MdtB.